A 554-amino-acid polypeptide reads, in one-letter code: MRREGTMRLHRTFLLRVYLKESAVITYPASKKIYCQGKIFPTIRVGMREIQLTNGDSLTLYDTSGPYSDPNISIKSPQGLPRLREPWIKVRPRKTQLAFAKEGVITPEMEYAAIRENQKRELKKNTDQERERRLQGNSLSARIPNPITPEFIRNEIACGRAILPANINHPESEPMIIGRHFLVKVNANIGNSSLTSSVEEEVEKLIWALRWGADTVMDLSTGKKIKEIRETILRHSPVPIGTVPLYEALEKVDGDVKALTWEIFRDTLISQAEQGVDYFTIHAGVLNRFIPLTQKRVTGIVSRGGSLMAKWCLLHREENFLYTHFTEICEIMRAYDVSFSLGDGLRPGSIADANDEAQFAELKIQGELNRIAWKYGVQVMNEGPGHIPLNLIEENMTKQLAYCREAPFYTLGPLTTDIAPGYDHIGSAIGAAFIAWQGCALLCYVTPKEHLGLPNKQDVKEGLIAYKIAAHAADLAKGHPAARQRDDLLSQARFEFRWHDQFNLALDAETARLFHDETLPKESAKHAHFCSLCGPKFCAYKTSHEVRDTLQKVT.

Substrate is bound by residues Asn-188, Met-217, Tyr-246, His-282, 302-304 (SRG), 343-346 (DGLR), and Glu-382. His-386 is a Zn(2+) binding site. Tyr-409 provides a ligand contact to substrate. His-450 serves as a coordination point for Zn(2+). Positions 530, 533, and 538 each coordinate [4Fe-4S] cluster.

It belongs to the ThiC family. In terms of assembly, homodimer. [4Fe-4S] cluster serves as cofactor.

The catalysed reaction is 5-amino-1-(5-phospho-beta-D-ribosyl)imidazole + S-adenosyl-L-methionine = 4-amino-2-methyl-5-(phosphooxymethyl)pyrimidine + CO + 5'-deoxyadenosine + formate + L-methionine + 3 H(+). It functions in the pathway cofactor biosynthesis; thiamine diphosphate biosynthesis. Its function is as follows. Catalyzes the synthesis of the hydroxymethylpyrimidine phosphate (HMP-P) moiety of thiamine from aminoimidazole ribotide (AIR) in a radical S-adenosyl-L-methionine (SAM)-dependent reaction. The sequence is that of Phosphomethylpyrimidine synthase from Coxiella burnetii (strain Dugway 5J108-111).